Here is a 907-residue protein sequence, read N- to C-terminus: Catenin alpha-1 (907 aa).

Threonine 2 carries the N-acetylthreonine modification. The interval 2-228 (TAVHAGNINF…PILYTASQAC (227 aa)) is involved in homodimerization. Lysine 57 participates in a covalent cross-link: Glycyl lysine isopeptide (Lys-Gly) (interchain with G-Cter in SUMO2). The segment at 97–148 (VRKQGDLMKSAAGEFADDPCSSVKRGNMVRAARALLSAVTRLLILADMADVY) is interaction with JUP and CTNNB1. A phosphoserine mark is found at serine 264, serine 268, serine 296, and serine 298. The interaction with alpha-actinin stretch occupies residues 326-395 (TRDDRRERIV…AVMDHVSDSF (70 aa)). Threonine 635 carries the phosphothreonine modification. Phosphoserine is present on serine 642. Threonine 646 carries the phosphothreonine modification. 2 positions are modified to phosphoserine: serine 653 and serine 656. Threonine 659 carries the post-translational modification Phosphothreonine. Lysine 798 participates in a covalent cross-link: Glycyl lysine isopeptide (Lys-Gly) (interchain with G-Cter in SUMO2). Residue serine 852 is modified to Phosphoserine. Positions 865-881 (PEKKPLVKREKQDETQT) are enriched in basic and acidic residues. A disordered region spans residues 865–895 (PEKKPLVKREKQDETQTKIKRASQKKHVNPV). Residues 882 to 892 (KIKRASQKKHV) show a composition bias toward basic residues.

It belongs to the vinculin/alpha-catenin family. In terms of assembly, monomer and homodimer; the monomer preferentially binds to CTNNB1 and the homodimer to actin. Component of an cadherin:catenin adhesion complex composed of at least of CDH26, beta-catenin/CTNNB1, alpha-catenin/CTNNA1 and p120 catenin/CTNND1. Possible component of an E-cadherin/ catenin adhesion complex together with E-cadherin/CDH1 and beta-catenin/CTNNB1 or gamma-catenin/JUP; the complex is located to adherens junctions. The stable association of CTNNA1 is controversial as CTNNA1 was shown not to bind to F-actin when assembled in the complex. Alternatively, the CTNNA1-containing complex may be linked to F-actin by other proteins such as LIMA1. Binds AFDN and F-actin. Interacts with ARHGAP21. Interacts with AJUBA. Interacts with LIMA1. Interacts with vinculin/VCL. Interacts with TJP2/ZO2 (via N-terminus). Interacts with TJP1/ZO1 (via N-terminus). In terms of processing, sumoylated. Post-translationally, phosphorylation seems to contribute to the strength of cell-cell adhesion rather than to the basic capacity for cell-cell adhesion.

It is found in the cytoplasm. The protein resides in the cytoskeleton. The protein localises to the cell junction. It localises to the adherens junction. Its subcellular location is the cell membrane. It is found in the nucleus. Functionally, associates with the cytoplasmic domain of a variety of cadherins. The association of catenins to cadherins produces a complex which is linked to the actin filament network, and which seems to be of primary importance for cadherins cell-adhesion properties. Can associate with both E- and N-cadherins. Originally believed to be a stable component of E-cadherin/catenin adhesion complexes and to mediate the linkage of cadherins to the actin cytoskeleton at adherens junctions. In contrast, cortical actin was found to be much more dynamic than E-cadherin/catenin complexes and CTNNA1 was shown not to bind to F-actin when assembled in the complex suggesting a different linkage between actin and adherens junctions components. The homodimeric form may regulate actin filament assembly and inhibit actin branching by competing with the Arp2/3 complex for binding to actin filaments. Involved in the regulation of WWTR1/TAZ, YAP1 and TGFB1-dependent SMAD2 and SMAD3 nuclear accumulation. May play a crucial role in cell differentiation. This Oryctolagus cuniculus (Rabbit) protein is Catenin alpha-1.